A 361-amino-acid chain; its full sequence is Chorismate synthase (361 aa).

Residues 38 to 49 (EKDMQHDLDRRR) show a composition bias toward basic and acidic residues. The tract at residues 38–58 (EKDMQHDLDRRRPGTSKYTTQ) is disordered. Arg48 lines the NADP(+) pocket. FMN contacts are provided by residues 125–127 (RSS), 238–239 (NA), Gly278, 293–297 (KPTSS), and Arg319.

This sequence belongs to the chorismate synthase family. Homotetramer. FMNH2 is required as a cofactor.

The enzyme catalyses 5-O-(1-carboxyvinyl)-3-phosphoshikimate = chorismate + phosphate. It participates in metabolic intermediate biosynthesis; chorismate biosynthesis; chorismate from D-erythrose 4-phosphate and phosphoenolpyruvate: step 7/7. Functionally, catalyzes the anti-1,4-elimination of the C-3 phosphate and the C-6 proR hydrogen from 5-enolpyruvylshikimate-3-phosphate (EPSP) to yield chorismate, which is the branch point compound that serves as the starting substrate for the three terminal pathways of aromatic amino acid biosynthesis. This reaction introduces a second double bond into the aromatic ring system. In Photobacterium profundum (strain SS9), this protein is Chorismate synthase.